The sequence spans 504 residues: Maturase K (504 aa).

This sequence belongs to the intron maturase 2 family. MatK subfamily.

The protein resides in the plastid. Its subcellular location is the chloroplast. Its function is as follows. Usually encoded in the trnK tRNA gene intron. Probably assists in splicing its own and other chloroplast group II introns. This is Maturase K from Lablab purpureus (Hyacinth bean).